The following is a 71-amino-acid chain: Protein MMP24OS (71 aa).

Gly residues predominate over residues 1–10 (MGAQLSGGRG). The tract at residues 1–61 (MGAQLSGGRG…PSPWGPLDDV (61 aa)) is disordered. The segment covering 36–55 (HPPQPQPQPQPQPQPEPSPW) has biased composition (pro residues).

This Homo sapiens (Human) protein is Protein MMP24OS.